Consider the following 503-residue polypeptide: Cytochrome P450 7A1 (503 aa).

The helical transmembrane segment at I4 to I24 threads the bilayer. C444 is a binding site for heme.

The protein belongs to the cytochrome P450 family. Requires heme as cofactor. In terms of tissue distribution, detected in liver (at protein level). Liver.

It localises to the endoplasmic reticulum membrane. The protein resides in the microsome membrane. It catalyses the reaction cholesterol + reduced [NADPH--hemoprotein reductase] + O2 = 7alpha-hydroxycholesterol + oxidized [NADPH--hemoprotein reductase] + H2O + H(+). The enzyme catalyses 4beta-hydroxycholesterol + reduced [NADPH--hemoprotein reductase] + O2 = 4beta,7alpha-dihydroxycholesterol + oxidized [NADPH--hemoprotein reductase] + H2O + H(+). The catalysed reaction is lathosterol + reduced [NADPH--hemoprotein reductase] + O2 = 7alpha,8alpha-epoxy-5alpha-cholestan-3beta-ol + oxidized [NADPH--hemoprotein reductase] + H2O + H(+). It carries out the reaction lathosterol + reduced [NADPH--hemoprotein reductase] + O2 = 5alpha-cholestan-7-oxo-3beta-ol + oxidized [NADPH--hemoprotein reductase] + H2O + H(+). It catalyses the reaction 7-dehydrocholesterol + reduced [NADPH--hemoprotein reductase] + O2 = 7-oxocholesterol + oxidized [NADPH--hemoprotein reductase] + H2O + H(+). The enzyme catalyses (24S)-hydroxycholesterol + reduced [NADPH--hemoprotein reductase] + O2 = (24S)-7alpha-dihydroxycholesterol + oxidized [NADPH--hemoprotein reductase] + H2O + H(+). The catalysed reaction is (24R)-hydroxycholesterol + reduced [NADPH--hemoprotein reductase] + O2 = (24R)-7alpha-dihydroxycholesterol + oxidized [NADPH--hemoprotein reductase] + H2O + H(+). It functions in the pathway lipid metabolism; bile acid biosynthesis. The protein operates within steroid metabolism; cholesterol degradation. In terms of biological role, a cytochrome P450 monooxygenase involved in the metabolism of endogenous cholesterol and its oxygenated derivatives (oxysterols). Mechanistically, uses molecular oxygen inserting one oxygen atom into a substrate, and reducing the second into a water molecule, with two electrons provided by NADPH via cytochrome P450 reductase (CPR; NADPH-ferrihemoprotein reductase). Functions as a critical regulatory enzyme of bile acid biosynthesis and cholesterol homeostasis. Catalyzes the hydroxylation of carbon hydrogen bond at 7-alpha position of cholesterol, a rate-limiting step in cholesterol catabolism and bile acid biosynthesis. 7-alpha hydroxylates several oxysterols, including 4beta-hydroxycholesterol and 24-hydroxycholesterol. Catalyzes the oxidation of the 7,8 double bond of 7-dehydrocholesterol and lathosterol with direct and predominant formation of the 7-keto derivatives. The polypeptide is Cytochrome P450 7A1 (Cyp7a1) (Rattus norvegicus (Rat)).